Reading from the N-terminus, the 405-residue chain is L-carnitine CoA-transferase (405 aa).

Residues Lys97 and Arg104 each coordinate CoA. Asp169 acts as the Nucleophile in catalysis.

Belongs to the CoA-transferase III family. CaiB subfamily. As to quaternary structure, homodimer.

Its subcellular location is the cytoplasm. The catalysed reaction is crotonobetainyl-CoA + (R)-carnitine = crotonobetaine + (R)-carnitinyl-CoA. It catalyses the reaction 4-(trimethylamino)butanoyl-CoA + (R)-carnitine = (R)-carnitinyl-CoA + 4-(trimethylamino)butanoate. It participates in amine and polyamine metabolism; carnitine metabolism. Functionally, catalyzes the reversible transfer of the CoA moiety from gamma-butyrobetainyl-CoA to L-carnitine to generate L-carnitinyl-CoA and gamma-butyrobetaine. Is also able to catalyze the reversible transfer of the CoA moiety from gamma-butyrobetainyl-CoA or L-carnitinyl-CoA to crotonobetaine to generate crotonobetainyl-CoA. This Salmonella typhi protein is L-carnitine CoA-transferase (caiB).